The sequence spans 295 residues: uncharacterized protein (295 aa).

Positions 1–58 (MESGDLRVFQMVAREGTITKAALQLGYVQSNVTARIQQLEAELGTTLFLRHNRGMTLS) constitute an HTH lysR-type domain. Positions 18–37 (ITKAALQLGYVQSNVTARIQ) form a DNA-binding region, H-T-H motif.

This sequence belongs to the LysR transcriptional regulatory family.

This is an uncharacterized protein from Bacillus subtilis (strain 168).